The sequence spans 246 residues: uncharacterized protein (246 aa).

3 disordered regions span residues 29–54, 93–114, and 148–246; these read SLET…ENGS, LRRT…EDKF, and PIPP…SVVI. Over residues 35–49 the composition is skewed to low complexity; that stretch reads PTSSSPSLSSNSDVS. Residues 172–183 are compositionally biased toward polar residues; the sequence is RQQTNNIRTLHV. Composition is skewed to low complexity over residues 190-203 and 214-225; these read SSSS…PSSS and SKTTKNRSSNSS. A glycan (N-linked (GlcNAc...) asparagine) is linked at Asn219. A compositionally biased stretch (polar residues) spans 235-246; the sequence is LTPSPTFESVVI.

This is an uncharacterized protein from Caenorhabditis elegans.